Reading from the N-terminus, the 276-residue chain is NAD-capped RNA hydrolase NudC (276 aa).

R82 is a substrate binding site. Residues C112 and C115 each contribute to the Zn(2+) site. Substrate is bound at residue E125. The Zn(2+) site is built by C130 and C133. Y138 lines the substrate pocket. Residues 139-262 enclose the Nudix hydrolase domain; the sequence is PRISPSMIVL…SIARYLIDLY (124 aa). 3 residues coordinate a divalent metal cation: A172, E188, and E192. The Nudix box signature appears at 173 to 194; it reads GFAEPGESAEECLVREVREEVA. Substrate is bound at residue 206-213; the sequence is QCWPFPHS. Residue E233 participates in a divalent metal cation binding. A255 contributes to the substrate binding site.

This sequence belongs to the Nudix hydrolase family. NudC subfamily. As to quaternary structure, homodimer. The cofactor is Mg(2+). Mn(2+) is required as a cofactor. It depends on Zn(2+) as a cofactor.

The enzyme catalyses a 5'-end NAD(+)-phospho-ribonucleoside in mRNA + H2O = a 5'-end phospho-adenosine-phospho-ribonucleoside in mRNA + beta-nicotinamide D-ribonucleotide + 2 H(+). The catalysed reaction is NAD(+) + H2O = beta-nicotinamide D-ribonucleotide + AMP + 2 H(+). It catalyses the reaction NADH + H2O = reduced beta-nicotinamide D-ribonucleotide + AMP + 2 H(+). In terms of biological role, mRNA decapping enzyme that specifically removes the nicotinamide adenine dinucleotide (NAD) cap from a subset of mRNAs by hydrolyzing the diphosphate linkage to produce nicotinamide mononucleotide (NMN) and 5' monophosphate mRNA. The NAD-cap is present at the 5'-end of some mRNAs and stabilizes RNA against 5'-processing. Has preference for mRNAs with a 5'-end purine. Catalyzes the hydrolysis of a broad range of dinucleotide pyrophosphates. This Pseudomonas entomophila (strain L48) protein is NAD-capped RNA hydrolase NudC.